A 338-amino-acid polypeptide reads, in one-letter code: S-adenosylmethionine:tRNA ribosyltransferase-isomerase (338 aa).

Belongs to the QueA family. Monomer.

The protein resides in the cytoplasm. The catalysed reaction is 7-aminomethyl-7-carbaguanosine(34) in tRNA + S-adenosyl-L-methionine = epoxyqueuosine(34) in tRNA + adenine + L-methionine + 2 H(+). It functions in the pathway tRNA modification; tRNA-queuosine biosynthesis. Functionally, transfers and isomerizes the ribose moiety from AdoMet to the 7-aminomethyl group of 7-deazaguanine (preQ1-tRNA) to give epoxyqueuosine (oQ-tRNA). The polypeptide is S-adenosylmethionine:tRNA ribosyltransferase-isomerase (Francisella philomiragia subsp. philomiragia (strain ATCC 25017 / CCUG 19701 / FSC 153 / O#319-036)).